The chain runs to 224 residues: Claudin-19 (224 aa).

Residues 1–7 (MANSGLQ) are Cytoplasmic-facing. A helical transmembrane segment spans residues 8–28 (LLGYFLALGGWVGIIASTALP). Residues 29-81 (QWKQSSYAGDAIITAVGLYEGLWMSCASQSTGQVQCKLYDSLLALDGHIQSAR) lie on the Extracellular side of the membrane. Cys-54 and Cys-64 are disulfide-bonded. The helical transmembrane segment at 82–102 (ALMVVAVLLGFVAMVLSVVGM) threads the bilayer. The Cytoplasmic portion of the chain corresponds to 103-117 (KCTRVGDSNPTAKSR). The helical transmembrane segment at 118–138 (VAISGGALFLLAGLCTLTAVS) threads the bilayer. Residues 139–160 (WYATLVTQEFFNPSTPVNARYE) are Extracellular-facing. A helical membrane pass occupies residues 161–181 (FGPALFVGWASAGLAMLGGSF). The Cytoplasmic portion of the chain corresponds to 182–224 (LCCTCPEPERANSIPQPYRSGPSTAAREPVVKLPASVKGPLGV).

This sequence belongs to the claudin family. Can form homo- and heteropolymeric tight junction strands. Interacts with other claudins including CLDN3, CLDN10, CLDN16 and CLDN18 with highest affinity for CLDN16. Interacts (via PDZ-binding motif TRV) with TJP1 (via PDZ domain). In terms of assembly, (Microbial infection) Interacts (via both extracellular domains) with Clostridium perfringens enterotoxin CPE; the interaction disrupts claudin assembly in tight junctions. Expressed in the corticomedullary axis of the TAL, specifically in the cortex and the outer stripe of outer medulla (OSOM) zone (at protein level). Expressed in peripheral nervous system, in Schwan cells (at protein level).

The protein localises to the cell junction. The protein resides in the tight junction. Its subcellular location is the cell membrane. The catalysed reaction is Mg(2+)(in) = Mg(2+)(out). It carries out the reaction Ca(2+)(in) = Ca(2+)(out). It catalyses the reaction Na(+)(in) = Na(+)(out). The enzyme catalyses K(+)(in) = K(+)(out). The catalysed reaction is Rb(+)(in) = Rb(+)(out). It carries out the reaction Cs(+)(in) = Cs(+)(out). It catalyses the reaction Li(+)(in) = Li(+)(out). Forms paracellular channels: coassembles with CLDN16 into tight junction strands with cation-selective channels through the strands, conveying epithelial permeability in a process known as paracellular tight junction permeability. Involved in the maintenance of ion gradients along the nephron. In the thick ascending limb (TAL) of Henle's loop, facilitates sodium paracellular permeability from the interstitial compartment to the lumen, contributing to the lumen-positive transepithelial potential that drives paracellular magnesium and calcium reabsorption. Forms paracellular barriers on its own. In the peripheral nervous system, represents a major constituent of the tight junctions in Schwann cells and contributes to electrical sealing. During retinal neurogenesis, may regulate the barrier properties of tight junctions in retinal pigment epithelium, required for proper retinal tissue differentiation and vision. The protein is Claudin-19 of Mus musculus (Mouse).